A 38-amino-acid polypeptide reads, in one-letter code: Large ribosomal subunit protein bL36 (38 aa).

It belongs to the bacterial ribosomal protein bL36 family.

In Pseudomonas entomophila (strain L48), this protein is Large ribosomal subunit protein bL36.